A 427-amino-acid polypeptide reads, in one-letter code: 3-phosphoshikimate 1-carboxyvinyltransferase (427 aa).

Lys-22, Ser-23, and Arg-27 together coordinate 3-phosphoshikimate. Lys-22 lines the phosphoenolpyruvate pocket. Gly-96 and Arg-124 together coordinate phosphoenolpyruvate. 7 residues coordinate 3-phosphoshikimate: Ser-169, Ser-170, Gln-171, Ser-197, Asp-313, Asn-336, and Lys-340. Residue Gln-171 coordinates phosphoenolpyruvate. Asp-313 functions as the Proton acceptor in the catalytic mechanism. Phosphoenolpyruvate contacts are provided by Arg-344, Arg-386, and Lys-411.

Belongs to the EPSP synthase family. Monomer.

The protein resides in the cytoplasm. The enzyme catalyses 3-phosphoshikimate + phosphoenolpyruvate = 5-O-(1-carboxyvinyl)-3-phosphoshikimate + phosphate. Its pathway is metabolic intermediate biosynthesis; chorismate biosynthesis; chorismate from D-erythrose 4-phosphate and phosphoenolpyruvate: step 6/7. Catalyzes the transfer of the enolpyruvyl moiety of phosphoenolpyruvate (PEP) to the 5-hydroxyl of shikimate-3-phosphate (S3P) to produce enolpyruvyl shikimate-3-phosphate and inorganic phosphate. This Salmonella typhi protein is 3-phosphoshikimate 1-carboxyvinyltransferase.